Here is a 408-residue protein sequence, read N- to C-terminus: Acetate kinase (408 aa).

Asparagine 10 is a binding site for Mg(2+). Residue lysine 17 coordinates ATP. Arginine 96 is a binding site for substrate. The active-site Proton donor/acceptor is aspartate 153. ATP-binding positions include 213 to 217 (HLGNG) and 288 to 290 (DLR). Glutamate 393 serves as a coordination point for Mg(2+).

It belongs to the acetokinase family. As to quaternary structure, homodimer. It depends on Mg(2+) as a cofactor. Requires Mn(2+) as cofactor.

Its subcellular location is the cytoplasm. The catalysed reaction is acetate + ATP = acetyl phosphate + ADP. It functions in the pathway metabolic intermediate biosynthesis; acetyl-CoA biosynthesis; acetyl-CoA from acetate: step 1/2. Functionally, catalyzes the formation of acetyl phosphate from acetate and ATP. Can also catalyze the reverse reaction. The chain is Acetate kinase from Borrelia duttonii (strain Ly).